The sequence spans 107 residues: Small ribosomal subunit protein uS10m (107 aa).

This sequence belongs to the universal ribosomal protein uS10 family.

The protein localises to the mitochondrion. This is Small ribosomal subunit protein uS10m (RPS10) from Prototheca wickerhamii.